A 427-amino-acid polypeptide reads, in one-letter code: MSSIVVVGTQWGDEGKGKITDFLAEQADVIARFSGGNNAGHTIKFGGETYKLHLVPSGIFYKEKLAVIGNGVVVDPVALLKELDALNERGISTDNLRISNRAQVILPYHIKQDEYEEERRGDNKIGTTKKGIGPAYVDKAQRIGIRVADLLDKETFEKLLKDNIEYKGAYFEGMFGKACPTFEEIFETYYAAGQRLAQFVTDTAKVLDDAFVADEKVLFEGAQGVMLDIDHGTYPFVTSSNPVAGNVTVGGGVGPTFVSKVIGVCKAYTSRVGDGPFPTELFDEDGHHIREVGREYGTTTGRPRRVGWFDSVVLRHSRRASGITDLSINSIDVLTGLKEVKICTAYELDGKEITEYPANLKDLQRCKPIFETLPGWTEDVTGCRSLEELPNNARRYLERISELCDVKISIFSVGPDRNQTNLLKSLW.

GTP-binding positions include Gly12 to Lys18 and Gly40 to Thr42. Asp13 acts as the Proton acceptor in catalysis. Residues Asp13 and Gly40 each coordinate Mg(2+). IMP is bound by residues Asp13 to Lys16, Asn38 to His41, Thr128, Arg142, Gln223, Thr238, and Arg302. His41 (proton donor) is an active-site residue. Thr298–Arg304 provides a ligand contact to substrate. GTP is bound by residues Arg304, Ser330–Asp332, and Ser412–Gly414.

Belongs to the adenylosuccinate synthetase family. In terms of assembly, homodimer. Mg(2+) is required as a cofactor.

The protein localises to the cytoplasm. The catalysed reaction is IMP + L-aspartate + GTP = N(6)-(1,2-dicarboxyethyl)-AMP + GDP + phosphate + 2 H(+). The protein operates within purine metabolism; AMP biosynthesis via de novo pathway; AMP from IMP: step 1/2. Plays an important role in the de novo pathway of purine nucleotide biosynthesis. Catalyzes the first committed step in the biosynthesis of AMP from IMP. This is Adenylosuccinate synthetase from Staphylococcus saprophyticus subsp. saprophyticus (strain ATCC 15305 / DSM 20229 / NCIMB 8711 / NCTC 7292 / S-41).